Reading from the N-terminus, the 129-residue chain is Glycine cleavage system H protein (129 aa).

Positions 24–106 constitute a Lipoyl-binding domain; sequence LLKIGVSEFA…IGEGWLVILK (83 aa). An N6-lipoyllysine modification is found at Lys65.

It belongs to the GcvH family. In terms of assembly, the glycine cleavage system is composed of four proteins: P, T, L and H. (R)-lipoate serves as cofactor.

Functionally, the glycine cleavage system catalyzes the degradation of glycine. The H protein shuttles the methylamine group of glycine from the P protein to the T protein. In Prochlorococcus marinus (strain AS9601), this protein is Glycine cleavage system H protein.